The sequence spans 456 residues: Serine/threonine-protein kinase meng-po (456 aa).

Residues 15–78 are disordered; the sequence is RSFGDGGSTN…RSSIYKKPDK (64 aa). The span at 22-55 shows a compositional bias: low complexity; it reads STNSRNSNNNSSTCTNHNNQKRCSTPLTPTSTST. Positions 101 to 367 constitute a Protein kinase domain; that stretch reads YNIEKTLAEG…VAKYMKDRWV (267 aa). Residues 107–115 and Lys-130 each bind ATP; that span reads LAEGCFAKI. Catalysis depends on Asp-221, which acts as the Proton acceptor. Phosphoserine; by PKA is present on Ser-334.

This sequence belongs to the protein kinase superfamily. Ser/Thr protein kinase family. The cofactor is Mg(2+). In terms of tissue distribution, expressed in the mushroom bodies (at protein level).

It catalyses the reaction L-seryl-[protein] + ATP = O-phospho-L-seryl-[protein] + ADP + H(+). The catalysed reaction is L-threonyl-[protein] + ATP = O-phospho-L-threonyl-[protein] + ADP + H(+). With respect to regulation, activated by Pka-C1-mediated phosphorylation of Ser-334. Its function is as follows. Serine/threonine-protein kinase involved in memory formation. Together with the cAMP-dependent protein kinase A Pka-C1, promotes long-term memory (LTM) by regulating CrebB stability and activity. Involved in the maintenance of anesthesia-sensitive memory (ASM) which includes short-term memory (STM) and middle-term memory (MTM). The protein is Serine/threonine-protein kinase meng-po of Drosophila melanogaster (Fruit fly).